The following is an 89-amino-acid chain: Small ribosomal subunit protein uS15 (89 aa).

The protein belongs to the universal ribosomal protein uS15 family. In terms of assembly, part of the 30S ribosomal subunit. Forms a bridge to the 50S subunit in the 70S ribosome, contacting the 23S rRNA.

In terms of biological role, one of the primary rRNA binding proteins, it binds directly to 16S rRNA where it helps nucleate assembly of the platform of the 30S subunit by binding and bridging several RNA helices of the 16S rRNA. Forms an intersubunit bridge (bridge B4) with the 23S rRNA of the 50S subunit in the ribosome. The sequence is that of Small ribosomal subunit protein uS15 from Shewanella piezotolerans (strain WP3 / JCM 13877).